The chain runs to 398 residues: Cysteine desulfurase (398 aa).

Pyridoxal 5'-phosphate-binding positions include 74-75, asparagine 155, glutamine 182, and 202-204; these read GT and CGH. Lysine 205 carries the post-translational modification N6-(pyridoxal phosphate)lysine. Over residues 230–244 the composition is skewed to basic and acidic residues; it reads GHQERSRRAGNGERA. A disordered region spans residues 230 to 253; sequence GHQERSRRAGNGERAGHRRAGGGA. The active-site Cysteine persulfide intermediate is cysteine 327. Cysteine 327 is a [2Fe-2S] cluster binding site.

Belongs to the class-V pyridoxal-phosphate-dependent aminotransferase family. NifS/IscS subfamily. As to quaternary structure, homodimer. Pyridoxal 5'-phosphate serves as cofactor.

It catalyses the reaction (sulfur carrier)-H + L-cysteine = (sulfur carrier)-SH + L-alanine. Its function is as follows. Catalyzes the removal of elemental sulfur atoms from cysteine to produce alanine. Seems to participate in the biosynthesis of the nitrogenase metalloclusters by providing the inorganic sulfur required for the Fe-S core formation. This Azospirillum brasilense protein is Cysteine desulfurase.